The sequence spans 246 residues: E3 ubiquitin-protein ligase MARCHF2 (246 aa).

The RING-CH-type zinc finger occupies 56–116; sequence DSQSDCPFCR…ELCHTEFAVE (61 aa). 8 residues coordinate Zn(2+): Cys64, Cys67, Cys80, Cys82, His90, Cys93, Cys106, and Cys109. The required for interaction with IKBKG stretch occupies residues 121–246; sequence PLTEWLKDPG…LKKVAEETPV (126 aa). The next 2 helical transmembrane spans lie at 138–158 and 175–195; these read LCCD…SGWL and AVGL…WTLV.

Interacts with STX6; the interaction promotes MARCHF2-mediated ubiquitination and degradation of CFTR. Interacts with MARCHF3. Interacts with GOPC/CAL; the interaction leads to CFTR ubiquitination and degradation. Interacts with CFTR; the interaction leads to CFTR ubiqtuitination and degradation. Interacts (via PDZ domain) with DLG1 (via PDZ domains); the interaction leads to DLG1 ubiqtuitination and degradation. Interacts with ERGIC3. Interacts with ADRB2. Interacts with IKBKG/NEMO; during the late stages of macrophage viral and bacterial infection; the interaction leads to ubiquitination and degradation of IKBKG/NEMO.

The protein localises to the endoplasmic reticulum membrane. The protein resides in the lysosome membrane. Its subcellular location is the endosome membrane. It localises to the golgi apparatus membrane. It is found in the cytoplasm. The protein localises to the cell membrane. The enzyme catalyses S-ubiquitinyl-[E2 ubiquitin-conjugating enzyme]-L-cysteine + [acceptor protein]-L-lysine = [E2 ubiquitin-conjugating enzyme]-L-cysteine + N(6)-ubiquitinyl-[acceptor protein]-L-lysine.. Its pathway is protein modification; protein ubiquitination. Functionally, E3 ubiquitin-protein ligase that may mediate ubiquitination of TFRC and CD86, and promote their subsequent endocytosis and sorting to lysosomes via multivesicular bodies. E3 ubiquitin ligases accept ubiquitin from an E2 ubiquitin-conjugating enzyme in the form of a thioester and then directly transfer the ubiquitin to targeted substrates. Together with GOPC/CAL mediates the ubiquitination and lysosomal degradation of CFTR. Ubiquitinates and therefore mediates the degradation of DLG1. Regulates the intracellular trafficking and secretion of alpha1-antitrypsin/SERPINA1 and HP/haptoglobin via ubiquitination and degradation of the cargo receptor ERGIC3. Negatively regulates the antiviral and antibacterial immune response by repression of the NF-kB and type 1 IFN signaling pathways, via MARCHF2-mediated K48-linked polyubiquitination of IKBKG/NEMO, resulting in its proteasomal degradation. May be involved in endosomal trafficking through interaction with STX6. The chain is E3 ubiquitin-protein ligase MARCHF2 (Marchf2) from Mus musculus (Mouse).